Reading from the N-terminus, the 235-residue chain is Centromere protein H (235 aa).

A disordered region spans residues Met1–Pro23. Residues Glu125–Arg145 are a coiled coil.

Belongs to the CENP-H/MCM16 family. In terms of assembly, component of the CENPA-HI complex, at least composed of CENPH, CENPI, CENPK, CENPL, CENPM, CENPO and CENPP. Interacts with NDC80.

It is found in the nucleus. The protein resides in the chromosome. It localises to the centromere. Its subcellular location is the kinetochore. In terms of biological role, component of the CENPA-HI complex, a centromeric complex involved in assembly of kinetochore proteins, mitotic progression and chromosome segregation. Required for the localization of CENPC but not CENPA to the centromere. It however may be involved in incorporation of newly synthesized CENPA into centromeres via its interaction with the CENPA-NAC complex. The sequence is that of Centromere protein H (CENPH) from Gallus gallus (Chicken).